A 305-amino-acid polypeptide reads, in one-letter code: Type II restriction enzyme SsoII (305 aa).

The enzyme catalyses Endonucleolytic cleavage of DNA to give specific double-stranded fragments with terminal 5'-phosphates.. Functionally, a P subtype restriction enzyme that recognizes the double-stranded sequence 5'-CCNGG-3' and cleaves before C-1. This Shigella sonnei protein is Type II restriction enzyme SsoII (ssoIIR).